Consider the following 245-residue polypeptide: MATPTGETQPAKHQEVGHKSLLQSDALYQYILETSVYPREPQPMKELRRITAKHPWNLMTTSADEGQFLNLLLKLINAKNTMEIGVYTGYSLLSTALALPEDGKILALDINRENYEIGLPIIQKAGVAHKIDFREGPALPLLDQMLQDEKCHGSFDFIFVDADKDNYLNYHKRLIDLVKFGGVIGYDNTLWNGSLVAPADAPLRKYVRYYRDFVLELNKALAVDPRVEICQLPVGDGITLCRRIS.

Residue Lys19 participates in substrate binding. Residues Thr61, Glu83, 85–86, Ser91, Asp109, and Ala138 each bind S-adenosyl-L-methionine; that span reads GV. Asp161 lines the substrate pocket. Asp161 serves as a coordination point for a divalent metal cation. Asp163 provides a ligand contact to S-adenosyl-L-methionine. Asp187 and Asn188 together coordinate a divalent metal cation. Asn192 lines the substrate pocket.

It belongs to the class I-like SAM-binding methyltransferase superfamily. Cation-dependent O-methyltransferase family. CCoAMT subfamily. Requires a divalent metal cation as cofactor.

It carries out the reaction (E)-caffeoyl-CoA + S-adenosyl-L-methionine = (E)-feruloyl-CoA + S-adenosyl-L-homocysteine + H(+). The protein operates within aromatic compound metabolism; phenylpropanoid biosynthesis. Its function is as follows. Methylates caffeoyl-CoA to feruloyl-CoA and 5-hydroxyferuloyl-CoA to sinapoyl-CoA. Plays a role in the synthesis of feruloylated polysaccharides. Involved in the reinforcement of the plant cell wall. Also involved in the responding to wounding or pathogen challenge by the increased formation of cell wall-bound ferulic acid polymers. The chain is Caffeoyl-CoA O-methyltransferase (CCOAOMT) from Zinnia elegans (Garden zinnia).